The chain runs to 308 residues: Bifunctional protein FolD (308 aa).

NADP(+)-binding positions include 171–173 (GRS), serine 198, and isoleucine 239.

It belongs to the tetrahydrofolate dehydrogenase/cyclohydrolase family. In terms of assembly, homodimer.

The enzyme catalyses (6R)-5,10-methylene-5,6,7,8-tetrahydrofolate + NADP(+) = (6R)-5,10-methenyltetrahydrofolate + NADPH. It carries out the reaction (6R)-5,10-methenyltetrahydrofolate + H2O = (6R)-10-formyltetrahydrofolate + H(+). It participates in one-carbon metabolism; tetrahydrofolate interconversion. In terms of biological role, catalyzes the oxidation of 5,10-methylenetetrahydrofolate to 5,10-methenyltetrahydrofolate and then the hydrolysis of 5,10-methenyltetrahydrofolate to 10-formyltetrahydrofolate. This Borreliella burgdorferi (strain ATCC 35210 / DSM 4680 / CIP 102532 / B31) (Borrelia burgdorferi) protein is Bifunctional protein FolD.